The primary structure comprises 93 residues: Large ribosomal subunit protein eL42 (93 aa).

Zn(2+)-binding residues include Cys11 and Cys14. A C4-type zinc finger spans residues 11 to 75; the sequence is CPNCDEHHQL…TDLKYRCSEC (65 aa). The interval 24–62 is disordered; sequence KVRSGRSSGMKWDARRTKRANASIGNHGRFSKVPVGNKP. Zn(2+) contacts are provided by Cys72 and Cys75.

Belongs to the eukaryotic ribosomal protein eL42 family. Part of the 50S ribosomal subunit. It depends on Zn(2+) as a cofactor.

Functionally, binds to the 23S rRNA. In Halobacterium salinarum (strain ATCC 700922 / JCM 11081 / NRC-1) (Halobacterium halobium), this protein is Large ribosomal subunit protein eL42.